We begin with the raw amino-acid sequence, 115 residues long: Fluoride-specific ion channel FluC 4 (115 aa).

The next 2 membrane-spanning stretches (helical) occupy residues 19–39 and 42–62; these read WGTF…AGLG and LGGI…LLGG. The Na(+) site is built by Gly61 and Thr64. Residues 89-109 form a helical membrane-spanning segment; the sequence is IVASALLCVLAVAAGYGGIMW.

Belongs to the fluoride channel Fluc/FEX (TC 1.A.43) family.

The protein localises to the cell inner membrane. It carries out the reaction fluoride(in) = fluoride(out). Na(+) is not transported, but it plays an essential structural role and its presence is essential for fluoride channel function. Its function is as follows. Fluoride-specific ion channel. Important for reducing fluoride concentration in the cell, thus reducing its toxicity. In Brucella melitensis biotype 1 (strain ATCC 23456 / CCUG 17765 / NCTC 10094 / 16M), this protein is Fluoride-specific ion channel FluC 4.